The chain runs to 125 residues: Large ribosomal subunit protein bL12 (125 aa).

The tract at residues 96–125 is disordered; sequence PAPVKEGATKDEAEEIKKKIEEAGGTAELK. Basic and acidic residues predominate over residues 102-117; the sequence is GATKDEAEEIKKKIEE.

The protein belongs to the bacterial ribosomal protein bL12 family. In terms of assembly, homodimer. Part of the ribosomal stalk of the 50S ribosomal subunit. Forms a multimeric L10(L12)X complex, where L10 forms an elongated spine to which 2 to 4 L12 dimers bind in a sequential fashion. Binds GTP-bound translation factors.

In terms of biological role, forms part of the ribosomal stalk which helps the ribosome interact with GTP-bound translation factors. Is thus essential for accurate translation. The sequence is that of Large ribosomal subunit protein bL12 from Alcanivorax borkumensis (strain ATCC 700651 / DSM 11573 / NCIMB 13689 / SK2).